Consider the following 211-residue polypeptide: WW domain-containing protein WWM1 (211 aa).

The WW domain maps to 9 to 43 (PQVPSGWKAVFDDEYQTWYYVDLSTNSSQWEPPRG). Residues 32–116 (STNSSQWEPP…QRYYPQQAPM (85 aa)) are disordered. Residues Lys50 and Lys60 each participate in a glycyl lysine isopeptide (Lys-Gly) (interchain with G-Cter in ubiquitin) cross-link. Ser75 bears the Phosphoserine mark. Thr78 is subject to Phosphothreonine. Low complexity predominate over residues 80-116 (QVQAGAQAQQPRYYQPQQPQYPQYPQQQRYYPQQAPM).

Interacts with metacaspase MCA1.

It is found in the cytoplasm. It localises to the nucleus. Its subcellular location is the mitochondrion. Involved in apoptosis. May play a role in nuclear function controlling cellular proliferation coupled to mitochondrial biogenesis. Causes impaired growth when overexpressed. This chain is WW domain-containing protein WWM1 (WWM1), found in Saccharomyces cerevisiae (strain ATCC 204508 / S288c) (Baker's yeast).